We begin with the raw amino-acid sequence, 487 residues long: Argininosuccinate lyase (487 aa).

It belongs to the lyase 1 family. Argininosuccinate lyase subfamily.

Its subcellular location is the cytoplasm. It carries out the reaction 2-(N(omega)-L-arginino)succinate = fumarate + L-arginine. It participates in amino-acid biosynthesis; L-arginine biosynthesis; L-arginine from L-ornithine and carbamoyl phosphate: step 3/3. In Methanothrix thermoacetophila (strain DSM 6194 / JCM 14653 / NBRC 101360 / PT) (Methanosaeta thermophila), this protein is Argininosuccinate lyase.